The following is a 154-amino-acid chain: Resuscitation-promoting factor RpfD (154 aa).

Residues 21 to 41 (IVCTVFIETAVVATMFVALLG) form a helical membrane-spanning segment.

Belongs to the transglycosylase family. Rpf subfamily.

The protein localises to the cell membrane. In terms of biological role, factor that stimulates resuscitation of dormant cells. Has peptidoglycan (PG) hydrolytic activity. PG fragments could either directly activate the resuscitation pathway of dormant bacteria or serve as a substrate for endogenous Rpf, resulting in low molecular weight products with resuscitation activity. This is Resuscitation-promoting factor RpfD (rpfD) from Mycobacterium tuberculosis (strain CDC 1551 / Oshkosh).